The chain runs to 110 residues: Insulin-2 (110 aa).

The N-terminal stretch at methionine 1–alanine 24 is a signal peptide. 3 cysteine pairs are disulfide-bonded: cysteine 31–cysteine 96, cysteine 43–cysteine 109, and cysteine 95–cysteine 100. The propeptide at glutamate 57–glutamine 87 is c peptide.

The protein belongs to the insulin family. As to quaternary structure, heterodimer of a B chain and an A chain linked by two disulfide bonds.

The protein localises to the secreted. Its function is as follows. Insulin decreases blood glucose concentration. It increases cell permeability to monosaccharides, amino acids and fatty acids. It accelerates glycolysis, the pentose phosphate cycle, and glycogen synthesis in liver. The chain is Insulin-2 (Ins2) from Rattus norvegicus (Rat).